The chain runs to 293 residues: MFKGAGTALATPFTSTGELDLAVFEQLIEQQLAANIQALVVGGTTGEGSTLTNEEFETLLETAIRVTAGRVPVIAGTGTNNTAQTIEKTQTAARLGADAAMLVTPYYNKTSQAGLVAHFTAVADAVDLPIMLYNVPSRTGVAISVETAVTLAKHPNIQAFKEASGDVSFMGELMTALPDGFAVFCGNDDQILPYMAWGAQGVISVLSNPYPAETQALAEALLANDYTTARRIQSDLMPVISALFSDVNPIPVKAALEEIGLAVGAPRLPLVRQSEAGHAHLLETMRSYKGVVG.

Threonine 45 serves as a coordination point for pyruvate. Tyrosine 133 acts as the Proton donor/acceptor in catalysis. Catalysis depends on lysine 161, which acts as the Schiff-base intermediate with substrate. Isoleucine 203 is a binding site for pyruvate.

This sequence belongs to the DapA family. In terms of assembly, homotetramer; dimer of dimers.

It localises to the cytoplasm. The enzyme catalyses L-aspartate 4-semialdehyde + pyruvate = (2S,4S)-4-hydroxy-2,3,4,5-tetrahydrodipicolinate + H2O + H(+). Its pathway is amino-acid biosynthesis; L-lysine biosynthesis via DAP pathway; (S)-tetrahydrodipicolinate from L-aspartate: step 3/4. Catalyzes the condensation of (S)-aspartate-beta-semialdehyde [(S)-ASA] and pyruvate to 4-hydroxy-tetrahydrodipicolinate (HTPA). This Exiguobacterium sibiricum (strain DSM 17290 / CCUG 55495 / CIP 109462 / JCM 13490 / 255-15) protein is 4-hydroxy-tetrahydrodipicolinate synthase.